The chain runs to 495 residues: Ribosomal protein uS12 methylthiotransferase RimO (495 aa).

The 117-residue stretch at 5–121 folds into the MTTase N-terminal domain; sequence RTVALVTLGC…ISDRLQTILN (117 aa). The [4Fe-4S] cluster site is built by cysteine 14, cysteine 50, and cysteine 84. Residues 145-183 form a disordered region; sequence QSAGADVALPGHGAPEGLPEDLPEGLAPESGPRAPLRRR. The region spanning 184-415 is the Radical SAM core domain; the sequence is LDGSPVASVK…RLAEELVAQR (232 aa). Residues cysteine 198, cysteine 202, and cysteine 205 each coordinate [4Fe-4S] cluster. One can recognise a TRAM domain in the interval 417-484; the sequence is EERVGETVHV…GVDLVAEPLP (68 aa).

Belongs to the methylthiotransferase family. RimO subfamily. [4Fe-4S] cluster serves as cofactor.

The protein localises to the cytoplasm. It carries out the reaction L-aspartate(89)-[ribosomal protein uS12]-hydrogen + (sulfur carrier)-SH + AH2 + 2 S-adenosyl-L-methionine = 3-methylsulfanyl-L-aspartate(89)-[ribosomal protein uS12]-hydrogen + (sulfur carrier)-H + 5'-deoxyadenosine + L-methionine + A + S-adenosyl-L-homocysteine + 2 H(+). Functionally, catalyzes the methylthiolation of an aspartic acid residue of ribosomal protein uS12. The protein is Ribosomal protein uS12 methylthiotransferase RimO of Streptomyces avermitilis (strain ATCC 31267 / DSM 46492 / JCM 5070 / NBRC 14893 / NCIMB 12804 / NRRL 8165 / MA-4680).